Consider the following 304-residue polypeptide: UDP-N-acetylenolpyruvoylglucosamine reductase (304 aa).

The FAD-binding PCMH-type domain maps to 32-198 (RVGGPADILV…LSAELELQEG (167 aa)). The active site involves Arg-177. Ser-227 serves as the catalytic Proton donor. The active site involves Glu-297.

Belongs to the MurB family. FAD is required as a cofactor.

Its subcellular location is the cytoplasm. It carries out the reaction UDP-N-acetyl-alpha-D-muramate + NADP(+) = UDP-N-acetyl-3-O-(1-carboxyvinyl)-alpha-D-glucosamine + NADPH + H(+). It participates in cell wall biogenesis; peptidoglycan biosynthesis. In terms of biological role, cell wall formation. This Clostridioides difficile (strain 630) (Peptoclostridium difficile) protein is UDP-N-acetylenolpyruvoylglucosamine reductase.